A 518-amino-acid chain; its full sequence is Bifunctional purine biosynthesis protein PurH (518 aa).

An MGS-like domain is found at methionine 1–cysteine 144.

The protein belongs to the PurH family.

It catalyses the reaction (6R)-10-formyltetrahydrofolate + 5-amino-1-(5-phospho-beta-D-ribosyl)imidazole-4-carboxamide = 5-formamido-1-(5-phospho-D-ribosyl)imidazole-4-carboxamide + (6S)-5,6,7,8-tetrahydrofolate. It carries out the reaction IMP + H2O = 5-formamido-1-(5-phospho-D-ribosyl)imidazole-4-carboxamide. The protein operates within purine metabolism; IMP biosynthesis via de novo pathway; 5-formamido-1-(5-phospho-D-ribosyl)imidazole-4-carboxamide from 5-amino-1-(5-phospho-D-ribosyl)imidazole-4-carboxamide (10-formyl THF route): step 1/1. It functions in the pathway purine metabolism; IMP biosynthesis via de novo pathway; IMP from 5-formamido-1-(5-phospho-D-ribosyl)imidazole-4-carboxamide: step 1/1. This chain is Bifunctional purine biosynthesis protein PurH, found in Lactococcus lactis subsp. cremoris (strain SK11).